Consider the following 331-residue polypeptide: Ornithine carbamoyltransferase (331 aa).

Residues 55–58 (STRT), Gln82, Arg106, and 133–136 (HPTQ) contribute to the carbamoyl phosphate site. L-ornithine is bound by residues Asn166, Asp230, and 234-235 (SM). Carbamoyl phosphate contacts are provided by residues 272–273 (CL) and Arg317.

Belongs to the aspartate/ornithine carbamoyltransferase superfamily. OTCase family.

Its subcellular location is the cytoplasm. The enzyme catalyses carbamoyl phosphate + L-ornithine = L-citrulline + phosphate + H(+). It functions in the pathway amino-acid biosynthesis; L-arginine biosynthesis; L-arginine from L-ornithine and carbamoyl phosphate: step 1/3. Reversibly catalyzes the transfer of the carbamoyl group from carbamoyl phosphate (CP) to the N(epsilon) atom of ornithine (ORN) to produce L-citrulline. In Neisseria meningitidis serogroup A / serotype 4A (strain DSM 15465 / Z2491), this protein is Ornithine carbamoyltransferase (argF).